We begin with the raw amino-acid sequence, 444 residues long: MSLANLRTHYTAEVKPESVDNGQKITLAGWIHEVRDLGGICFVVLRDREGKAQVTLVKKKIDKELFDAARRLIRESVISVTGSVKFEEKAPNGYELLPEEIKVLNVAGSPLPMDTTGKVEAELDTRLDSRFIDLRRAETTAVFKIRHEALQAIREYFVKNKFIETATPKVVATATEGGTALFPITYFDREAFLNQSPQLFKQILMGGGFDRVFEIGPIFRAEEHDTRRHLNEATSIDVEVSFADHFDVMEILENLVAHIYTRVIENCKASLEILGVELKVPKTPFLKLTYDEVIEIVNSRCEEKMHWGDDLGTLGEHTVGNYVYETTGESHYFIIDWPTEIKPFYAMPYEDRPEFSKSFDMMHRTMELSSGAQRIHISELLKSRIESQGLNPDGFEFYLKAFEYGMPPHAGWGMGCERFVMTMLGTENIRDTVLFPRDRRRLSP.

E176 lines the L-aspartate pocket. The segment at 198-201 (QLFK) is aspartate. R220 provides a ligand contact to L-aspartate. ATP-binding positions include 220–222 (RAE), 228–230 (RHL), and E367. Residues E367 and S370 each coordinate Mg(2+). L-aspartate is bound by residues S370 and R374. Position 415–418 (415–418 (GCER)) interacts with ATP.

It belongs to the class-II aminoacyl-tRNA synthetase family. Type 2 subfamily. As to quaternary structure, homodimer. Mg(2+) is required as a cofactor.

It is found in the cytoplasm. The enzyme catalyses tRNA(Asx) + L-aspartate + ATP = L-aspartyl-tRNA(Asx) + AMP + diphosphate. Aspartyl-tRNA synthetase with relaxed tRNA specificity since it is able to aspartylate not only its cognate tRNA(Asp) but also tRNA(Asn). Reaction proceeds in two steps: L-aspartate is first activated by ATP to form Asp-AMP and then transferred to the acceptor end of tRNA(Asp/Asn). This is Aspartate--tRNA(Asp/Asn) ligase from Methanosarcina acetivorans (strain ATCC 35395 / DSM 2834 / JCM 12185 / C2A).